Here is a 76-residue protein sequence, read N- to C-terminus: Exodeoxyribonuclease 7 small subunit (76 aa).

It belongs to the XseB family. As to quaternary structure, heterooligomer composed of large and small subunits.

It localises to the cytoplasm. It carries out the reaction Exonucleolytic cleavage in either 5'- to 3'- or 3'- to 5'-direction to yield nucleoside 5'-phosphates.. Functionally, bidirectionally degrades single-stranded DNA into large acid-insoluble oligonucleotides, which are then degraded further into small acid-soluble oligonucleotides. The chain is Exodeoxyribonuclease 7 small subunit from Legionella pneumophila (strain Paris).